The following is a 580-amino-acid chain: Multidrug resistance-like ATP-binding protein MdlB (580 aa).

Positions 25–310 (LILAFIFLLS…ITIQQSVLQQ (286 aa)) constitute an ABC transmembrane type-1 domain. The next 6 membrane-spanning stretches (helical) occupy residues 26–46 (ILAF…PILI), 61–81 (LLII…SVFL), 150–170 (IILI…MALV), 173–193 (FILP…TPLL), 247–267 (LDGF…LCNF), and 268–288 (MFLF…YAFI). The ABC transporter domain maps to 341 to 575 (INIQNVSFYH…KSCYYKMYKF (235 aa)). 375–382 (GHTGSGKS) contacts ATP.

This sequence belongs to the ABC transporter superfamily. Drug exporter-2 (TC 3.A.1.117) family.

It localises to the cell membrane. The catalysed reaction is ATP + H2O + xenobioticSide 1 = ADP + phosphate + xenobioticSide 2.. This is Multidrug resistance-like ATP-binding protein MdlB (mdlB) from Buchnera aphidicola subsp. Acyrthosiphon pisum (strain APS) (Acyrthosiphon pisum symbiotic bacterium).